The following is an 871-amino-acid chain: Alanine--tRNA ligase (871 aa).

Residues His-561, His-565, Cys-665, and His-669 each coordinate Zn(2+).

This sequence belongs to the class-II aminoacyl-tRNA synthetase family. Zn(2+) serves as cofactor.

The protein resides in the cytoplasm. It carries out the reaction tRNA(Ala) + L-alanine + ATP = L-alanyl-tRNA(Ala) + AMP + diphosphate. In terms of biological role, catalyzes the attachment of alanine to tRNA(Ala) in a two-step reaction: alanine is first activated by ATP to form Ala-AMP and then transferred to the acceptor end of tRNA(Ala). Also edits incorrectly charged Ser-tRNA(Ala) and Gly-tRNA(Ala) via its editing domain. This is Alanine--tRNA ligase from Dehalococcoides mccartyi (strain CBDB1).